We begin with the raw amino-acid sequence, 355 residues long: Methylthioribose-1-phosphate isomerase (355 aa).

Substrate-binding positions include 53-55, Arg96, and Gln205; that span reads RGA. Asp246 (proton donor) is an active-site residue. Substrate is bound at residue 256–257; the sequence is NK.

The protein belongs to the eIF-2B alpha/beta/delta subunits family. MtnA subfamily.

It carries out the reaction 5-(methylsulfanyl)-alpha-D-ribose 1-phosphate = 5-(methylsulfanyl)-D-ribulose 1-phosphate. The protein operates within amino-acid biosynthesis; L-methionine biosynthesis via salvage pathway; L-methionine from S-methyl-5-thio-alpha-D-ribose 1-phosphate: step 1/6. Its function is as follows. Catalyzes the interconversion of methylthioribose-1-phosphate (MTR-1-P) into methylthioribulose-1-phosphate (MTRu-1-P). This Thermosynechococcus vestitus (strain NIES-2133 / IAM M-273 / BP-1) protein is Methylthioribose-1-phosphate isomerase.